The chain runs to 64 residues: UPF0434 protein TERTU_2813 (64 aa).

It belongs to the UPF0434 family.

This Teredinibacter turnerae (strain ATCC 39867 / T7901) protein is UPF0434 protein TERTU_2813.